A 248-amino-acid polypeptide reads, in one-letter code: Protein GrpE (248 aa).

The interval 229-248 (AAPKEDTLPAQENQSSPADS) is disordered. Over residues 238-248 (AQENQSSPADS) the composition is skewed to polar residues.

This sequence belongs to the GrpE family. As to quaternary structure, homodimer.

The protein localises to the cytoplasm. In terms of biological role, participates actively in the response to hyperosmotic and heat shock by preventing the aggregation of stress-denatured proteins, in association with DnaK and GrpE. It is the nucleotide exchange factor for DnaK and may function as a thermosensor. Unfolded proteins bind initially to DnaJ; upon interaction with the DnaJ-bound protein, DnaK hydrolyzes its bound ATP, resulting in the formation of a stable complex. GrpE releases ADP from DnaK; ATP binding to DnaK triggers the release of the substrate protein, thus completing the reaction cycle. Several rounds of ATP-dependent interactions between DnaJ, DnaK and GrpE are required for fully efficient folding. The chain is Protein GrpE from Trichormus variabilis (strain ATCC 29413 / PCC 7937) (Anabaena variabilis).